The chain runs to 121 residues: Surface glycoprotein CD59 homolog (121 aa).

A signal peptide spans 1 to 19 (MYILFTLVLTFVFCKPIHS). Positions 20–104 (LQCYNCSHST…ENIKRTISDK (85 aa)) constitute a UPAR/Ly6 domain. Intrachain disulfides connect cysteine 22/cysteine 45, cysteine 25/cysteine 32, cysteine 38/cysteine 58, cysteine 64/cysteine 82, and cysteine 83/cysteine 88. Asparagine 24 is a glycosylation site (N-linked (GlcNAc...) asparagine; by host). Asparagine 96 is lipidated: GPI-anchor amidated asparagine; by host. The propeptide at 97–121 (IKRTISDKALLLLALFLVTAWNFPL) is removed in mature form.

It localises to the host cell membrane. The protein is Surface glycoprotein CD59 homolog (15) of Saimiriine herpesvirus 2 (strain 11) (SaHV-2).